The following is a 155-amino-acid chain: Ribosome maturation factor RimP (155 aa).

The protein belongs to the RimP family.

The protein localises to the cytoplasm. Required for maturation of 30S ribosomal subunits. This Prochlorococcus marinus subsp. pastoris (strain CCMP1986 / NIES-2087 / MED4) protein is Ribosome maturation factor RimP.